A 305-amino-acid polypeptide reads, in one-letter code: Dihydroorotate dehydrogenase B (NAD(+)), catalytic subunit (305 aa).

FMN-binding positions include Ser-21 and 45–46 (KA). Substrate-binding positions include Lys-45 and 69 to 73 (NAIGL). Positions 99 and 127 each coordinate FMN. Residue Asn-127 participates in substrate binding. Catalysis depends on Cys-130, which acts as the Nucleophile. Residues Lys-165 and Ile-190 each coordinate FMN. A substrate-binding site is contributed by 191-192 (NT). Residues Gly-216, 242–243 (GG), and 264–265 (GT) contribute to the FMN site.

It belongs to the dihydroorotate dehydrogenase family. Type 1 subfamily. In terms of assembly, heterotetramer of 2 PyrK and 2 PyrD type B subunits. FMN serves as cofactor.

Its subcellular location is the cytoplasm. The catalysed reaction is (S)-dihydroorotate + NAD(+) = orotate + NADH + H(+). Its pathway is pyrimidine metabolism; UMP biosynthesis via de novo pathway; orotate from (S)-dihydroorotate (NAD(+) route): step 1/1. Catalyzes the conversion of dihydroorotate to orotate with NAD(+) as electron acceptor. The chain is Dihydroorotate dehydrogenase B (NAD(+)), catalytic subunit (pyrD) from Staphylococcus carnosus (strain TM300).